A 116-amino-acid polypeptide reads, in one-letter code: Ig heavy chain V region 3-6 (116 aa).

A signal peptide spans 1 to 18 (MKVLSLLYLLTAIPGILS). The tract at residues 19 to 48 (DVQLQESGPGLVKPSQSLSLTCSVTGYSIT) is framework-1. A disulfide bond links Cys-40 and Cys-114. Residues 49–53 (SGYYW) are complementarity-determining-1. Residues 54-67 (NWIRQFPGNKLEWM) are framework-2. The segment at 68 to 84 (GYISYDGSNNYNPSLKN) is complementarity-determining-2. A framework-3 region spans residues 85–116 (RISITRDTSKNQFFLKLNSVTTEDTATYYCAR).

This is Ig heavy chain V region 3-6 (Ighv3-6) from Mus musculus (Mouse).